A 368-amino-acid chain; its full sequence is DNA integrity scanning protein DisA (368 aa).

The 139-residue stretch at 15-153 folds into the DAC domain; sequence DERLRATLAA…DGRRHVLDEP (139 aa). Residues Gly82, Leu100, and 113–117 each bind ATP; that span reads TRHRS. The disordered stretch occupies residues 101–121; it reads QPDPSIPTNESGTRHRSAERT. Residues 112–121 show a composition bias toward basic and acidic residues; the sequence is GTRHRSAERT.

The protein belongs to the DisA family. In terms of assembly, homooctamer. Mg(2+) is required as a cofactor.

The catalysed reaction is 2 ATP = 3',3'-c-di-AMP + 2 diphosphate. In terms of biological role, participates in a DNA-damage check-point. DisA forms globular foci that rapidly scan along the chromosomes searching for lesions. Its function is as follows. Also has diadenylate cyclase activity, catalyzing the condensation of 2 ATP molecules into cyclic di-AMP (c-di-AMP). c-di-AMP likely acts as a signaling molecule that may couple DNA integrity with a cellular process. The sequence is that of DNA integrity scanning protein DisA from Acidothermus cellulolyticus (strain ATCC 43068 / DSM 8971 / 11B).